A 311-amino-acid polypeptide reads, in one-letter code: Aquaporin-1 (311 aa).

Over 1–16 (MHPQVASLFDNVYEDL) the chain is Cytoplasmic. A helical transmembrane segment spans residues 17-37 (AAATLEFIGTAFFLLFGLGGI). Residues 38–56 (QASTAEDTASSQPPASGIE) are Extracellular-facing. The chain crosses the membrane as a helical span at residues 57–77 (HVLYISTCMGFSLVVSAWLFF). A topological domain (cytoplasmic) is located at residue Arg78. The chain crosses the membrane as a helical span at residues 79–99 (VTGGLFNPNISFALLLVGGLK). The short motif at 85–87 (NPN) is the NPA 1 element. Residue Pro100 is a topological domain, extracellular. Residues 101-121 (LRFVLFCIAQLTGAIAGAAIV) form a helical membrane-spanning segment. Topologically, residues 122 to 143 (RGLTSAPLSVNNVLQQGTSAAQ) are cytoplasmic. The helical transmembrane segment at 144–164 (GVFIEMFITAALVLSVLMLAA) threads the bilayer. Residues 165–168 (EKHE) lie on the Extracellular side of the membrane. A helical transmembrane segment spans residues 169–189 (ATPFAPVGIGLTLFACHLFAV). The Cytoplasmic segment spans residues 190–215 (YYTGAAMNSARAFGPAVISGFPEPQH). Positions 197 to 199 (NSA) match the NPA 2 motif. Residues 216 to 236 (WVYWVGPFLGSLLGAGFYATL) form a helical membrane-spanning segment. The Extracellular portion of the chain corresponds to 237 to 311 (KHYKYWRLNP…TSSRTNFSPV (75 aa)). The disordered stretch occupies residues 276–311 (DEETRNGCASNEEGVRATGDEKSSNATSSRTNFSPV). A compositionally biased stretch (basic and acidic residues) spans 288 to 298 (EGVRATGDEKS). Polar residues predominate over residues 299-311 (SNATSSRTNFSPV). Asn300 carries N-linked (GlcNAc...) asparagine glycosylation.

Belongs to the MIP/aquaporin (TC 1.A.8) family.

It is found in the cell membrane. The enzyme catalyses H2O(in) = H2O(out). It carries out the reaction H2O2(out) = H2O2(in). The catalysed reaction is nitric oxide(out) = nitric oxide(in). It catalyses the reaction CO2(out) = CO2(in). Its function is as follows. Water channel required to facilitate the transport of water across membranes. Also mediates the transport nitric oxide, hydrogen peroxide and carbon dioxide across the membrane. Required for Hartig net development in trembling aspen trees. Contributes in fungal cellular processes during the basidiocarp formation. The polypeptide is Aquaporin-1 (Laccaria bicolor (Bicoloured deceiver)).